The following is a 148-amino-acid chain: Large ribosomal subunit protein bL9 (148 aa).

It belongs to the bacterial ribosomal protein bL9 family.

Binds to the 23S rRNA. In Bacillus thuringiensis subsp. konkukian (strain 97-27), this protein is Large ribosomal subunit protein bL9.